Here is a 348-residue protein sequence, read N- to C-terminus: Protein-glutamate methylesterase/protein-glutamine glutaminase 5 (348 aa).

A Response regulatory domain is found at Arg8–Glu125. Position 59 is a 4-aspartylphosphate (Asp59). Residues Arg157–Arg348 enclose the CheB-type methylesterase domain. Active-site residues include Ser169, His196, and Asp292.

It belongs to the CheB family. In terms of processing, phosphorylated by CheA. Phosphorylation of the N-terminal regulatory domain activates the methylesterase activity.

It is found in the cytoplasm. It carries out the reaction [protein]-L-glutamate 5-O-methyl ester + H2O = L-glutamyl-[protein] + methanol + H(+). It catalyses the reaction L-glutaminyl-[protein] + H2O = L-glutamyl-[protein] + NH4(+). Functionally, involved in chemotaxis. Part of a chemotaxis signal transduction system that modulates chemotaxis in response to various stimuli. Catalyzes the demethylation of specific methylglutamate residues introduced into the chemoreceptors (methyl-accepting chemotaxis proteins or MCP) by CheR. Also mediates the irreversible deamidation of specific glutamine residues to glutamic acid. This is Protein-glutamate methylesterase/protein-glutamine glutaminase 5 from Myxococcus xanthus (strain DK1622).